A 147-amino-acid polypeptide reads, in one-letter code: Bis(5'-nucleosyl)-tetraphosphatase [asymmetrical] (147 aa).

Residue Ala2 is modified to N-acetylalanine. A Nudix hydrolase domain is found at 2-139 (ALRACGLIIF…EMKATLQEGH (138 aa)). The Nudix box motif lies at 43–64 (GHVDPGENDLETALRETREETG).

The protein belongs to the Nudix hydrolase family. Requires a divalent metal cation as cofactor.

The catalysed reaction is P(1),P(4)-bis(5'-guanosyl) tetraphosphate + H2O = GMP + GTP + 2 H(+). The enzyme catalyses a 5'-end CoA-ribonucleoside in mRNA + H2O = a 5'-end phospho-adenosine-phospho-ribonucleoside in mRNA + (R)-4'-phosphopantetheine + 2 H(+). It catalyses the reaction a 5'-end FAD-phospho-ribonucleoside in mRNA + H2O = a 5'-end phospho-adenosine-phospho-ribonucleoside in mRNA + FMN + 2 H(+). Its function is as follows. Catalyzes the asymmetric hydrolysis of diadenosine 5',5'''-P1,P4-tetraphosphate (Ap4A) to yield AMP and ATP. Exhibits decapping activity towards FAD-capped RNAs and dpCoA-capped RNAs in vitro. In Mus musculus (Mouse), this protein is Bis(5'-nucleosyl)-tetraphosphatase [asymmetrical] (Nudt2).